A 158-amino-acid polypeptide reads, in one-letter code: Phosphopantetheine adenylyltransferase (158 aa).

Position 9 (Thr9) interacts with substrate. Residues 9–10 (TF) and His17 each bind ATP. Lys41, Leu73, and Arg87 together coordinate substrate. Residues 88–90 (GLR), Glu98, and 123–129 (YAYISSS) contribute to the ATP site.

Belongs to the bacterial CoaD family. As to quaternary structure, homohexamer. Requires Mg(2+) as cofactor.

The protein resides in the cytoplasm. The enzyme catalyses (R)-4'-phosphopantetheine + ATP + H(+) = 3'-dephospho-CoA + diphosphate. It functions in the pathway cofactor biosynthesis; coenzyme A biosynthesis; CoA from (R)-pantothenate: step 4/5. In terms of biological role, reversibly transfers an adenylyl group from ATP to 4'-phosphopantetheine, yielding dephospho-CoA (dPCoA) and pyrophosphate. The protein is Phosphopantetheine adenylyltransferase of Allochromatium vinosum (strain ATCC 17899 / DSM 180 / NBRC 103801 / NCIMB 10441 / D) (Chromatium vinosum).